The sequence spans 233 residues: Small ribosomal subunit protein uS3 (233 aa).

Residues 39 to 107 (VRQFLASELT…PSQINIAEVR (69 aa)) form the KH type-2 domain.

It belongs to the universal ribosomal protein uS3 family. As to quaternary structure, part of the 30S ribosomal subunit. Forms a tight complex with proteins S10 and S14.

In terms of biological role, binds the lower part of the 30S subunit head. Binds mRNA in the 70S ribosome, positioning it for translation. The sequence is that of Small ribosomal subunit protein uS3 from Baumannia cicadellinicola subsp. Homalodisca coagulata.